Here is a 149-residue protein sequence, read N- to C-terminus: MKFTYLVSLAAFAVTALGSRPTPPNLEFLFSANLTKGPAYIYDQSDAQIKALQTLTGGIIAGPNFDGTVIGGTALSTRGADGTIRADAHYLIQTSDGANILVTESAAIPYVAVLFDTSSEKYNWLNNVTAWGTPPNLNEINFLEYWQIE.

The signal sequence occupies residues 1–18 (MKFTYLVSLAAFAVTALG). N-linked (GlcNAc...) asparagine glycans are attached at residues Asn33 and Asn127.

In terms of assembly, homotetramer.

It carries out the reaction 2,4,7,9-tetrahydroxy-6-methyl-8-(2-methylbut-3-en-2-yl)-1-oxo-1H-phenalen-3-ol = (2'R)-atrovenetin. The protein operates within secondary metabolite biosynthesis. In terms of biological role, hydroalkoxylation enzyme; part of the gene cluster that mediates the biosynthesis of phenalenones such as herqueinone, compounds that have been reported to treat tumors, bacterial infections and/or mycoses, and rheumatic diseases. The non-reducing polyketide synthase phnA synthesizes the heptaketide backbone and cyclizes it into the angular, hemiketal-containing naphtho-gamma-pyrone prephenalenone. The product template (PT) domain of phnA catalyzes only the C4-C9 aldol condensation, which is unprecedented among known PT domains. The transformation of prephenalenone to phenalenones requires an FAD-dependent monooxygenase phnB, which catalyzes the C2 aromatic hydroxylation of prephenalenone and ring opening of the gamma-pyrone ring simultaneously. Subsequent intramolecular deprotonation of C3 phenolic oxygen accelerates phenalenone ring closure to yield the tricyclic phenalenone core with a C2 hydroxylation. The prenyltransferase phnF further catalyzes reverse C-prenylation of phenalenone by direct electrophilic substitution at C6, or possibly via first a forward O-prenylation of a neighboring phenol in phenalenone, followed by a Claisen rearrangement. The hydroalkoxylation enzyme phnH catalyzes the 5-exo-trig cyclization via acid catalysis after the spontaneous deprotonation of 7-OH, which leads to the formation of the dihydrobenzofuran atrovenetin. Atrovenetin is further converted to deoxyherqueinone by the O-methyltransferase phnC which can methylate C2-OH to stabilize the northern portion of the phenalenone core. Finally, the oxidoreductase phnG converts deoxyherqueinone to herqueinone via C6 hydroxylation. This chain is Hydroalkoxylation enzyme phnH, found in Penicillium herquei.